Here is a 523-residue protein sequence, read N- to C-terminus: Katanin p60 ATPase-containing subunit A1 (523 aa).

The tract at residues 82-215 (KEAPTGRRAA…DGKSKRGLYE (134 aa)) is disordered. Low complexity predominate over residues 178–194 (AGARSSTAGKKGAASKS). ATP is bound at residue 279–286 (GPPGTGKT).

The protein belongs to the AAA ATPase family. Katanin p60 subunit A1 subfamily. As to quaternary structure, may homooligomerize. Component of KTN80-KTN1 complexes composed of a hexamer of KTN1-KTN80 heterodimers that sense microtubule (MT) geometry to confer precise MT severing. Interacts directly with KTN80.1, KTN80.2, KTN80.3 and KTN80.4. Can interact with KTN80.1. May interact with the kinesin related protein KIN14A. Interacts with microtubule polymers. Binds to IPGA1. In terms of tissue distribution, expressed ubiquitously, including siliques, flowers, leaves, stems and roots.

The protein localises to the cytoplasm. It is found in the cytoskeleton. The enzyme catalyses n ATP + n H2O + a microtubule = n ADP + n phosphate + (n+1) alpha/beta tubulin heterodimers.. Functionally, severs microtubules in vitro in an ATP-dependent manner. Required for oligomerization of functional KTN80-KTN1 complexes that catalyze microtubule severing. This activity may promote rapid reorganization of cellular microtubule arrays. May be required for reorientation of cortical microtubule arrays during cellular elongation. Failure to correctly orient these arrays drastically compromises fiber length, cell wall thickness and mechanical strength. May also be required for the spatial organization of developmental cues within the root. Involved in the IPGA1- and AN-dependent regulation of pavement cells morphogenesis leading to puzzle shape. The polypeptide is Katanin p60 ATPase-containing subunit A1 (Arabidopsis thaliana (Mouse-ear cress)).